The following is a 482-amino-acid chain: MKFIIKLFPEITIKSQSVRLRFIKILTGNIRNVLKHYDETLAVVRHWDNIEVRAKDENQRLAIRDALTRIPGIHHILEVEDVPFTDMHDIFEKALVQYRDQLEGKTFCVRVKRRGKHDFSSIDVERYVGGGLNQHIESARVKLTNPEVTVHLEVEDDRLLLIKGRYEGIGGFPIGTQEDVLSLISGGFDSGVSSYMLMRRGCRVHYCFFNLGGAAHEIGVRQVAHYLWNRFGSSHRVRFVAINFEPVVGEILEKIDDGQMGVILKRMMVRAASKVAERYGVQALVTGEALGQVSSQTLTNLRLIDNVSDTLILRPLISYDKEHIINLARQIGTEDFARTMPEYCGVISKSPTVKAVKSKIEAEEEKFDFSILDKVVEEANNVDIREIAQQTEQEVVEVETVNGFGPNDVILDIRSIDEQEDKPLKVEGIDVVSLPFYKLSTKFGDLDQSKTWLLWCERGVMSRLQALYLREQGFNNVKVYRP.

A THUMP domain is found at 61–165 (LAIRDALTRI…DDRLLLIKGR (105 aa)). Residues 183–184 (LI), Lys-265, Gly-287, and Gln-296 contribute to the ATP site. Cysteines 344 and 456 form a disulfide. The 79-residue stretch at 404 to 482 (FGPNDVILDI…GFNNVKVYRP (79 aa)) folds into the Rhodanese domain. Cys-456 serves as the catalytic Cysteine persulfide intermediate.

It belongs to the ThiI family.

It is found in the cytoplasm. It carries out the reaction [ThiI sulfur-carrier protein]-S-sulfanyl-L-cysteine + a uridine in tRNA + 2 reduced [2Fe-2S]-[ferredoxin] + ATP + H(+) = [ThiI sulfur-carrier protein]-L-cysteine + a 4-thiouridine in tRNA + 2 oxidized [2Fe-2S]-[ferredoxin] + AMP + diphosphate. It catalyses the reaction [ThiS sulfur-carrier protein]-C-terminal Gly-Gly-AMP + S-sulfanyl-L-cysteinyl-[cysteine desulfurase] + AH2 = [ThiS sulfur-carrier protein]-C-terminal-Gly-aminoethanethioate + L-cysteinyl-[cysteine desulfurase] + A + AMP + 2 H(+). It functions in the pathway cofactor biosynthesis; thiamine diphosphate biosynthesis. In terms of biological role, catalyzes the ATP-dependent transfer of a sulfur to tRNA to produce 4-thiouridine in position 8 of tRNAs, which functions as a near-UV photosensor. Also catalyzes the transfer of sulfur to the sulfur carrier protein ThiS, forming ThiS-thiocarboxylate. This is a step in the synthesis of thiazole, in the thiamine biosynthesis pathway. The sulfur is donated as persulfide by IscS. This chain is tRNA sulfurtransferase, found in Escherichia coli O45:K1 (strain S88 / ExPEC).